A 98-amino-acid chain; its full sequence is Large ribosomal subunit protein uL23 (98 aa).

Belongs to the universal ribosomal protein uL23 family. As to quaternary structure, part of the 50S ribosomal subunit. Contacts protein L29, and trigger factor when it is bound to the ribosome.

Its function is as follows. One of the early assembly proteins it binds 23S rRNA. One of the proteins that surrounds the polypeptide exit tunnel on the outside of the ribosome. Forms the main docking site for trigger factor binding to the ribosome. The sequence is that of Large ribosomal subunit protein uL23 from Rickettsia akari (strain Hartford).